Consider the following 419-residue polypeptide: Zinc finger protein Pegasus (419 aa).

Lys5 participates in a covalent cross-link: Glycyl lysine isopeptide (Lys-Gly) (interchain with G-Cter in SUMO2). 3 C2H2-type zinc fingers span residues 82-104, 110-132, and 138-161; these read LKCR…IRIH, HRCH…MRSH, and YKCE…RRKH. Residue Lys185 forms a Glycyl lysine isopeptide (Lys-Gly) (interchain with G-Cter in SUMO2) linkage. Composition is skewed to polar residues over residues 223–236 and 262–273; these read QTDS…TTPT and LSSLPPENQNPA. Disordered stretches follow at residues 223 to 247 and 262 to 356; these read QTDS…QELM and LSSL…PALP. Residues 290–311 show a composition bias toward low complexity; it reads QPSTQAVVSAVSASIPQSSSPT. The segment covering 332 to 349 has biased composition (polar residues); the sequence is SEPSAHTSTPSIGNSQPS. 2 C2H2-type zinc fingers span residues 364 to 386 and 392 to 416; these read HHCQ…MGCH and FQCN…RGQH.

This sequence belongs to the Ikaros C2H2-type zinc-finger protein family. As to quaternary structure, self-associates. Interacts with other family members; IKZF1, IKZF2, IKZF3 and IKZF4. In terms of tissue distribution, expressed in brain, heart, skeletal muscle, kidney, and liver. Expressed in the hematopoietic cell lines MOLT-4, NALM-6 and K-562. Highly expressed in THP-1 and M-07e cell lines, which have characteristics of myeloid and early megakaryocytic cells respectively.

The protein localises to the nucleus. Functionally, transcriptional repressor that binds the core 5'GNNTGTNG-3' DNA consensus sequence. Involved in megakaryocyte differentiation. This is Zinc finger protein Pegasus (IKZF5) from Homo sapiens (Human).